Consider the following 156-residue polypeptide: Transcription factor MafK (156 aa).

The tract at residues Met1–Ala21 is disordered. Residues Arg51–Lys76 form a basic motif region. Residues Arg51–Leu114 enclose the bZIP domain. The interval Leu79–Leu93 is leucine-zipper.

It belongs to the bZIP family. Maf subfamily. Homodimer or heterodimer.

The protein localises to the nucleus. Functionally, since they lack a putative transactivation domain, the small Mafs behave as transcriptional repressors when they dimerize among themselves. However, they act as transcriptional activators by dimerizing with other (usually larger) basic-zipper proteins and recruiting them to specific DNA-binding sites. Small Maf proteins heterodimerize with Fos and may act as competitive repressors of the NF-E2 transcription factor. This is Transcription factor MafK (MAFK) from Gallus gallus (Chicken).